Here is a 118-residue protein sequence, read N- to C-terminus: Elicitin (118 aa).

An N-terminal signal peptide occupies residues 1–20 (MNFRALFAATVAALVGSTSA). 3 disulfides stabilise this stretch: C23–C91, C47–C76, and C71–C115.

Belongs to the elicitin family.

It is found in the secreted. Induces local and distal defense responses (incompatible hypersensitive reaction) in plants from the solanaceae and cruciferae families. Elicits leaf necrosis and causes the accumulation of pathogenesis-related proteins. Might interact with the lipidic molecules of the plasma membrane. This Phytophthora nicotianae (Potato buckeye rot agent) protein is Elicitin (PARA1).